Reading from the N-terminus, the 955-residue chain is 2-oxoglutarate dehydrogenase E1 component (955 aa).

It belongs to the alpha-ketoglutarate dehydrogenase family. Homodimer. Part of the 2-oxoglutarate dehydrogenase (OGDH) complex composed of E1 (2-oxoglutarate dehydrogenase), E2 (dihydrolipoamide succinyltransferase) and E3 (dihydrolipoamide dehydrogenase); the complex contains multiple copies of the three enzymatic components (E1, E2 and E3). Requires thiamine diphosphate as cofactor.

It catalyses the reaction N(6)-[(R)-lipoyl]-L-lysyl-[protein] + 2-oxoglutarate + H(+) = N(6)-[(R)-S(8)-succinyldihydrolipoyl]-L-lysyl-[protein] + CO2. Its function is as follows. E1 component of the 2-oxoglutarate dehydrogenase (OGDH) complex which catalyzes the decarboxylation of 2-oxoglutarate, the first step in the conversion of 2-oxoglutarate to succinyl-CoA and CO(2). This Bacillus cereus (strain ATCC 10987 / NRS 248) protein is 2-oxoglutarate dehydrogenase E1 component.